A 477-amino-acid polypeptide reads, in one-letter code: Endoglucanase A (477 aa).

The signal sequence occupies residues 1–32 (MKNVKKRVGVVLLILAVLGVYMLAMPANTVSA). Catalysis depends on glutamate 95, which acts as the Proton donor. Aspartate 152 functions as the Nucleophile in the catalytic mechanism. A Dockerin domain is found at 411 to 477 (PQVVYGDVNG…LIKSIPHLPY (67 aa)).

This sequence belongs to the glycosyl hydrolase 8 (cellulase D) family.

It carries out the reaction Endohydrolysis of (1-&gt;4)-beta-D-glucosidic linkages in cellulose, lichenin and cereal beta-D-glucans.. In terms of biological role, this enzyme catalyzes the endohydrolysis of 1,4-beta-glucosidic linkages in cellulose, lichenin and cereal beta-D-glucans. The protein is Endoglucanase A (celA) of Acetivibrio thermocellus (strain ATCC 27405 / DSM 1237 / JCM 9322 / NBRC 103400 / NCIMB 10682 / NRRL B-4536 / VPI 7372) (Clostridium thermocellum).